Here is a 415-residue protein sequence, read N- to C-terminus: Serine hydroxymethyltransferase (415 aa).

(6S)-5,6,7,8-tetrahydrofolate is bound by residues L117 and 121–123 (GHL). K226 bears the N6-(pyridoxal phosphate)lysine mark. Residue E241 participates in (6S)-5,6,7,8-tetrahydrofolate binding.

This sequence belongs to the SHMT family. Homodimer. The cofactor is pyridoxal 5'-phosphate.

Its subcellular location is the cytoplasm. It catalyses the reaction (6R)-5,10-methylene-5,6,7,8-tetrahydrofolate + glycine + H2O = (6S)-5,6,7,8-tetrahydrofolate + L-serine. The protein operates within one-carbon metabolism; tetrahydrofolate interconversion. It participates in amino-acid biosynthesis; glycine biosynthesis; glycine from L-serine: step 1/1. Catalyzes the reversible interconversion of serine and glycine with tetrahydrofolate (THF) serving as the one-carbon carrier. This reaction serves as the major source of one-carbon groups required for the biosynthesis of purines, thymidylate, methionine, and other important biomolecules. Also exhibits THF-independent aldolase activity toward beta-hydroxyamino acids, producing glycine and aldehydes, via a retro-aldol mechanism. In Bacillus pumilus (strain SAFR-032), this protein is Serine hydroxymethyltransferase.